The sequence spans 455 residues: Dihydrolipoyllysine-residue succinyltransferase component of 2-oxoglutarate dehydrogenase complex, mitochondrial (455 aa).

The N-terminal 68 residues, M1 to K68, are a transit peptide targeting the mitochondrion. Residues V71–R145 enclose the Lipoyl-binding domain. S82 is subject to Phosphoserine. K111 carries the post-translational modification N6-lipoyllysine. Residues K153–A173 are compositionally biased toward low complexity. Residues K153–E214 are disordered. Residue K155 is modified to N6-acetyllysine. The span at V174 to P195 shows a compositional bias: pro residues. Positions L221–L453 are catalytic. 5 positions are modified to N6-acetyllysine: K269, K274, K275, K279, and K309. Residues H426 and D430 contribute to the active site.

This sequence belongs to the 2-oxoacid dehydrogenase family. The 2-oxoglutarate dehydrogenase complex is composed of OGDH (2-oxoglutarate dehydrogenase; E1), DLST (dihydrolipoamide succinyltransferase; E2), DLD (dihydrolipoamide dehydrogenase; E3) and the assembly factor KGD4. It contains multiple copies of the three enzymatic components (E1, E2 and E3). In the nucleus, the 2-oxoglutarate dehydrogenase complex associates with KAT2A. Interacts with ABHD11; this interaction maintains the functional lipoylation of the 2-oxoglutarate dehydrogenase complex. (R)-lipoate is required as a cofactor.

It is found in the mitochondrion matrix. It localises to the nucleus. It catalyses the reaction N(6)-[(R)-dihydrolipoyl]-L-lysyl-[protein] + succinyl-CoA = N(6)-[(R)-S(8)-succinyldihydrolipoyl]-L-lysyl-[protein] + CoA. The protein operates within amino-acid degradation; L-lysine degradation via saccharopine pathway; glutaryl-CoA from L-lysine: step 6/6. Its pathway is carbohydrate metabolism; tricarboxylic acid cycle. In terms of biological role, dihydrolipoamide succinyltransferase (E2) component of the 2-oxoglutarate dehydrogenase complex. The 2-oxoglutarate dehydrogenase complex catalyzes the overall conversion of 2-oxoglutarate to succinyl-CoA and CO(2). The 2-oxoglutarate dehydrogenase complex is mainly active in the mitochondrion. A fraction of the 2-oxoglutarate dehydrogenase complex also localizes in the nucleus and is required for lysine succinylation of histones: associates with KAT2A on chromatin and provides succinyl-CoA to histone succinyltransferase KAT2A. This is Dihydrolipoyllysine-residue succinyltransferase component of 2-oxoglutarate dehydrogenase complex, mitochondrial from Sus scrofa (Pig).